Consider the following 592-residue polypeptide: Frizzled-9 (592 aa).

Positions 1–23 are cleaved as a signal peptide; sequence MAVPPLLRGALLLWQLLATGGAA. Residues 24–230 lie on the Extracellular side of the membrane; the sequence is LEIGRFDPER…EVFWSRRDKD (207 aa). An FZ domain is found at 35–156; it reads RGPAPCQAME…NDPHALCMEA (122 aa). Intrachain disulfides connect cysteine 40–cysteine 101, cysteine 48–cysteine 94, cysteine 85–cysteine 123, cysteine 112–cysteine 153, and cysteine 116–cysteine 140. N-linked (GlcNAc...) asparagine glycosylation is present at asparagine 54. A required for Wnt-activated receptor activity region spans residues 59–173; sequence PNLLGHTSQG…PTEPHKGLGM (115 aa). The N-linked (GlcNAc...) asparagine glycan is linked to asparagine 159. A helical transmembrane segment spans residues 231 to 251; the sequence is FALVWMAVWSALCFFSTAFTV. Residues 252–267 lie on the Cytoplasmic side of the membrane; it reads FTFLLEPHRFQYPERP. A helical transmembrane segment spans residues 268-288; the sequence is IIFLSMCYNVYSLAFLIRAVA. Over 289–316 the chain is Extracellular; it reads GAQSVACDQEAGALYVIQEGLENTGCTL. The chain crosses the membrane as a helical span at residues 317–337; sequence VFLLLYYFGMASSLWWVVLTL. Over 338–356 the chain is Cytoplasmic; that stretch reads TWFLAAGKKWGHEAIEAHG. The helical transmembrane segment at 357 to 377 threads the bilayer; that stretch reads SYFHMAAWGLPALKTIVVLTL. Residues 378-401 are Extracellular-facing; sequence RKVAGDELTGLCYVASMDPAALTG. The helical transmembrane segment at 402–422 threads the bilayer; that stretch reads FVLVPLSCYLVLGTSFLLTGF. Over 423 to 448 the chain is Cytoplasmic; it reads VALFHIRKIMKTGGTNTEKLEKLMVK. The helical transmembrane segment at 449 to 469 threads the bilayer; it reads IGVFSILYTVPATCVIVCYVY. The Extracellular segment spans residues 470–509; that stretch reads ERLNMDFWRLRATEQPCTAATVPGGRRDCSLPGGSVPTVA. A helical transmembrane segment spans residues 510–530; the sequence is VFMLKIFMSLVVGITSGVWVW. The Cytoplasmic portion of the chain corresponds to 531–592; it reads SSKTFQTWQS…DPSLENPTHL (62 aa). The Lys-Thr-X-X-X-Trp motif, mediates interaction with the PDZ domain of Dvl family members signature appears at 533–538; it reads KTFQTW. Residues 555–592 are required for CTNNB1 accumulation and TCF transcription factor activity; that stretch reads ACRTPGGYGRGTHCHYKAPTVVLHMTKTDPSLENPTHL.

This sequence belongs to the G-protein coupled receptor Fz/Smo family. Post-translationally, ubiquitinated by ZNRF3, leading to its degradation by the proteasome. As to expression, in the embryo, found in the neural tube, trunk skeletal muscle precursors (myotomes), limb skeletal anlagen, craniofacial regions and nephric ducts. In the adult, expression is abundant in heart, brain, testis and skeletal muscle. In the testis, expressed in all spermatogenic cell types. Lower levels in adult lung, liver and kidney. Barely detectable in spleen. Expressed also in chondrocytes.

It localises to the cell membrane. Receptor for WNT2 that is coupled to the beta-catenin canonical signaling pathway, which leads to the activation of disheveled proteins, inhibition of GSK-3 kinase, nuclear accumulation of beta-catenin and activation of Wnt target genes. Plays a role in neuromuscular junction (NMJ) assembly by negatively regulating the clustering of acetylcholine receptors (AChR) through the beta-catenin canonical signaling pathway. May play a role in neural progenitor cells (NPCs) viability through the beta-catenin canonical signaling pathway by negatively regulating cell cycle arrest leading to inhibition of neuron apoptotic process. During hippocampal development, regulates neuroblast proliferation and apoptotic cell death. Controls bone formation through non canonical Wnt signaling mediated via ISG15. Positively regulates bone regeneration through non canonical Wnt signaling. This is Frizzled-9 (Fzd9) from Mus musculus (Mouse).